The following is a 175-amino-acid chain: Protein CENTRORADIALIS-like (175 aa).

Belongs to the phosphatidylethanolamine-binding protein family. Expressed in tissues surrounding vascular bundles in hypocotyl of 2-week-old plants.

It localises to the cytoplasm. In terms of biological role, may form complexes with phosphorylated ligands by interfering with kinases and their effectors. Can substitute for TERMINAL FLOWER 1 (in vitro). This chain is Protein CENTRORADIALIS-like (CEN), found in Arabidopsis thaliana (Mouse-ear cress).